Reading from the N-terminus, the 195-residue chain is Fe/S biogenesis protein NfuA (195 aa).

Cys152 and Cys155 together coordinate [4Fe-4S] cluster.

The protein belongs to the NfuA family. Homodimer. [4Fe-4S] cluster serves as cofactor.

Functionally, involved in iron-sulfur cluster biogenesis. Binds a 4Fe-4S cluster, can transfer this cluster to apoproteins, and thereby intervenes in the maturation of Fe/S proteins. Could also act as a scaffold/chaperone for damaged Fe/S proteins. This chain is Fe/S biogenesis protein NfuA, found in Vibrio cholerae serotype O1 (strain ATCC 39315 / El Tor Inaba N16961).